The primary structure comprises 340 residues: Eukaryotic translation initiation factor 3 subunit I (340 aa).

WD repeat units follow at residues 8-47, 50-89, 91-135, 150-189, 194-233, and 291-330; these read GHER…RLGT, GHQG…CVKV, DFPT…GEGN, CEQS…QLQN, EFDY…VMKT, and GHFG…FDFM.

This sequence belongs to the eIF-3 subunit I family. As to quaternary structure, component of the eukaryotic translation initiation factor 3 (eIF-3) complex.

It is found in the cytoplasm. In terms of biological role, component of the eukaryotic translation initiation factor 3 (eIF-3) complex, which is involved in protein synthesis of a specialized repertoire of mRNAs and, together with other initiation factors, stimulates binding of mRNA and methionyl-tRNAi to the 40S ribosome. The eIF-3 complex specifically targets and initiates translation of a subset of mRNAs involved in cell proliferation. The polypeptide is Eukaryotic translation initiation factor 3 subunit I (Coccidioides immitis (strain RS) (Valley fever fungus)).